A 106-amino-acid polypeptide reads, in one-letter code: Large ribosomal subunit protein uL24 (106 aa).

This sequence belongs to the universal ribosomal protein uL24 family. In terms of assembly, part of the 50S ribosomal subunit.

Its function is as follows. One of two assembly initiator proteins, it binds directly to the 5'-end of the 23S rRNA, where it nucleates assembly of the 50S subunit. In terms of biological role, one of the proteins that surrounds the polypeptide exit tunnel on the outside of the subunit. This chain is Large ribosomal subunit protein uL24, found in Parabacteroides distasonis (strain ATCC 8503 / DSM 20701 / CIP 104284 / JCM 5825 / NCTC 11152).